The primary structure comprises 326 residues: MSPATAPVLISCGEPAGIGPEIAVAAWDALQGTIPLAWVGDPRHLPASTTFTAITHPRAVADVPTGSLPVLVHDFAAPSTPGHPDPANAQGVIDVIAACVAWVQEGAAAALCTAPIHKKALIDGADFKHPGHTEYLQALAGGRSRAVMMLASDALRVVPTTIHIALEDVPRVLTPALLRETITITHAALQRQFGIQAPRIVVAGLNPHAGEGGAMGLEEQDWIADVISALAASGMNLRGPLPADTMFHARAREGYDAAIAMYHDQALIPIKTLDFDRGVNVTLGLPFIRTSPDHGTAFDIAGKGIANPTSMIEAIKLAAHMAARHV.

His132 and Thr133 together coordinate substrate. A divalent metal cation contacts are provided by His163, His208, and His263. Substrate-binding residues include Lys271, Asn280, and Arg289.

It belongs to the PdxA family. As to quaternary structure, homodimer. It depends on Zn(2+) as a cofactor. Requires Mg(2+) as cofactor. Co(2+) is required as a cofactor.

It is found in the cytoplasm. The enzyme catalyses 4-(phosphooxy)-L-threonine + NAD(+) = 3-amino-2-oxopropyl phosphate + CO2 + NADH. Its pathway is cofactor biosynthesis; pyridoxine 5'-phosphate biosynthesis; pyridoxine 5'-phosphate from D-erythrose 4-phosphate: step 4/5. Catalyzes the NAD(P)-dependent oxidation of 4-(phosphooxy)-L-threonine (HTP) into 2-amino-3-oxo-4-(phosphooxy)butyric acid which spontaneously decarboxylates to form 3-amino-2-oxopropyl phosphate (AHAP). In Roseobacter denitrificans (strain ATCC 33942 / OCh 114) (Erythrobacter sp. (strain OCh 114)), this protein is 4-hydroxythreonine-4-phosphate dehydrogenase.